The chain runs to 265 residues: Transcription factor LBX1 (265 aa).

Residues 1–20 (MTSKDEAKSSSVEERRRHAL) show a composition bias toward basic and acidic residues. Residues 1–33 (MTSKDEAKSSSVEERRRHALDLLPPPANSNKPL) form a disordered region. The homeobox DNA-binding region spans 125–184 (RRKSRTAFTNHQIYELEKRFLYQKYLSPADRDQIAQQLGLTNAQVITWFQNRRAKLKRDL). Residues 212-265 (EEETNSVRDDSRSRSPQLGLSGHMPLSPSSPLTEQHTSKECSEDEEDVEIDVDD) are disordered. Positions 253–265 (SEDEEDVEIDVDD) are enriched in acidic residues.

The protein localises to the nucleus. Transcription factor that controls hypaxial muscle development by down-regulating myod1 and cdkn1b/p27, thereby allowing myoblasts to proliferate before the onset of terminal differentiation. The chain is Transcription factor LBX1 from Xenopus tropicalis (Western clawed frog).